Reading from the N-terminus, the 1092-residue chain is DNA polymerase II large subunit (1092 aa).

This sequence belongs to the archaeal DNA polymerase II family. In terms of assembly, heterodimer of a large subunit and a small subunit.

It catalyses the reaction DNA(n) + a 2'-deoxyribonucleoside 5'-triphosphate = DNA(n+1) + diphosphate. The catalysed reaction is Exonucleolytic cleavage in the 3'- to 5'-direction to yield nucleoside 5'-phosphates.. Its function is as follows. Possesses two activities: a DNA synthesis (polymerase) and an exonucleolytic activity that degrades single-stranded DNA in the 3'- to 5'-direction. Has a template-primer preference which is characteristic of a replicative DNA polymerase. The polypeptide is DNA polymerase II large subunit (polC) (Methanothermobacter thermautotrophicus (strain ATCC 29096 / DSM 1053 / JCM 10044 / NBRC 100330 / Delta H) (Methanobacterium thermoautotrophicum)).